A 679-amino-acid chain; its full sequence is Protein hook (679 aa).

A Calponin-homology (CH) domain is found at 6–123 (NEMYYSLLEW…RLLQLVLGCA (118 aa)). Coiled coils occupy residues 135-437 (EIMC…LKCG) and 480-574 (QTAL…QEIL).

Belongs to the hook family. In terms of assembly, homodimer. Interacts with microtubules via its N-terminus.

The protein resides in the cytoplasm. It localises to the cytoskeleton. Its subcellular location is the endosome. It is found in the synapse. Functionally, involved in endocytic trafficking by stabilizing organelles of the endocytic pathway. Probably acts as a cytoskeletal linker protein required to tether endosome vesicles to the cytoskeleton. Involved in modulation of endocytosis at stages required for down-regulation of membrane proteins that control synapse size. Not involved in synaptic vesicle recycling. Required in R7 cells for boss endocytosis into multivesicular bodies (MVBs). Has a role in regulating adult longevity. This is Protein hook from Drosophila yakuba (Fruit fly).